A 178-amino-acid polypeptide reads, in one-letter code: ATP-dependent protease subunit HslV (178 aa).

Residue T5 is part of the active site. Residues S161, C164, and T167 each contribute to the Na(+) site.

This sequence belongs to the peptidase T1B family. HslV subfamily. A double ring-shaped homohexamer of HslV is capped on each side by a ring-shaped HslU homohexamer. The assembly of the HslU/HslV complex is dependent on binding of ATP.

The protein resides in the cytoplasm. The catalysed reaction is ATP-dependent cleavage of peptide bonds with broad specificity.. Allosterically activated by HslU binding. Protease subunit of a proteasome-like degradation complex believed to be a general protein degrading machinery. The polypeptide is ATP-dependent protease subunit HslV (Syntrophomonas wolfei subsp. wolfei (strain DSM 2245B / Goettingen)).